The chain runs to 284 residues: tRNA uridine(34) hydroxylase (284 aa).

The Rhodanese domain occupies 132–226; the sequence is AGRPVVMLDT…YFEEVGGAHY (95 aa). The active-site Cysteine persulfide intermediate is C186.

The protein belongs to the TrhO family.

It carries out the reaction uridine(34) in tRNA + AH2 + O2 = 5-hydroxyuridine(34) in tRNA + A + H2O. In terms of biological role, catalyzes oxygen-dependent 5-hydroxyuridine (ho5U) modification at position 34 in tRNAs. The chain is tRNA uridine(34) hydroxylase from Burkholderia cenocepacia (strain HI2424).